We begin with the raw amino-acid sequence, 220 residues long: MDGFHDLGGFQGFGKVPHTINSLSYKQVFKQDWEHLAYSLMFVGVDQLKKFSVDEVRHAVERLDVRQHVGTQYYERYIIATATLLVETGVITQAELDQALGSHFKLANPAHATGRPAITGRPPFEVGDRVVVRDEYVAGHIRMPAYVRGKEGVVLHRTSEQWPFPDAIGHGDLSAAHQPTYHVEFRVKDLWGDAADDGYVVVDLFESYLDKAPGAQAVNA.

It belongs to the nitrile hydratase subunit beta family. Heterodimer of an alpha and a beta chain.

It catalyses the reaction an aliphatic primary amide = an aliphatic nitrile + H2O. Its function is as follows. NHase catalyzes the hydration of various nitrile compounds to the corresponding amides. This is Nitrile hydratase subunit beta (nthB) from Pseudomonas chlororaphis (Pseudomonas aureofaciens).